Consider the following 493-residue polypeptide: Glutamyl-tRNA(Gln) amidotransferase subunit A (493 aa).

Catalysis depends on charge relay system residues K79 and S159. Catalysis depends on S183, which acts as the Acyl-ester intermediate.

This sequence belongs to the amidase family. GatA subfamily. As to quaternary structure, heterotrimer of A, B and C subunits.

It catalyses the reaction L-glutamyl-tRNA(Gln) + L-glutamine + ATP + H2O = L-glutaminyl-tRNA(Gln) + L-glutamate + ADP + phosphate + H(+). In terms of biological role, allows the formation of correctly charged Gln-tRNA(Gln) through the transamidation of misacylated Glu-tRNA(Gln) in organisms which lack glutaminyl-tRNA synthetase. The reaction takes place in the presence of glutamine and ATP through an activated gamma-phospho-Glu-tRNA(Gln). The protein is Glutamyl-tRNA(Gln) amidotransferase subunit A of Chelativorans sp. (strain BNC1).